A 76-amino-acid polypeptide reads, in one-letter code: UPF0291 protein GWCH70_1239 (76 aa).

The tract at residues 54 to 76 is disordered; the sequence is VIDPNGNDVTPKKLKESQKSRLH. A compositionally biased stretch (basic and acidic residues) spans 63-76; the sequence is TPKKLKESQKSRLH.

It belongs to the UPF0291 family.

It is found in the cytoplasm. In Geobacillus sp. (strain WCH70), this protein is UPF0291 protein GWCH70_1239.